Reading from the N-terminus, the 183-residue chain is Ribulose bisphosphate carboxylase small subunit, chloroplastic (183 aa).

The transit peptide at 1–59 directs the protein to the chloroplast; sequence MASSMISSGTVATVSADRPAPAQARMVAPFNGLKSSSAFPVTRKSNDITSIASNGGRVQ.

It belongs to the RuBisCO small chain family. Heterohexadecamer of 8 large and 8 small subunits.

The protein localises to the plastid. Its subcellular location is the chloroplast. In terms of biological role, ruBisCO catalyzes two reactions: the carboxylation of D-ribulose 1,5-bisphosphate, the primary event in carbon dioxide fixation, as well as the oxidative fragmentation of the pentose substrate. Both reactions occur simultaneously and in competition at the same active site. Although the small subunit is not catalytic it is essential for maximal activity. This Pyrus pyrifolia (Chinese pear) protein is Ribulose bisphosphate carboxylase small subunit, chloroplastic.